An 887-amino-acid polypeptide reads, in one-letter code: 3-hydroxy-3-methylglutaryl-coenzyme A reductase (887 aa).

The Cytoplasmic segment spans residues 1 to 9; sequence MLSRLFRMH. A helical membrane pass occupies residues 10 to 39; the sequence is GLFVASHPWEVIVGTVTLTICMMSMNMFTG. Residues 40–56 lie on the Lumenal side of the membrane; sequence NNKICGWNYECPKFEED. A helical transmembrane segment spans residues 57–78; that stretch reads VLSSDIIILTITRCIAILYIYF. Positions 61–218 constitute an SSD domain; that stretch reads DIIILTITRC…MTFFPACVSL (158 aa). Positions 75–78 match the INSIG-binding motif motif; the sequence is YIYF. The Cytoplasmic segment spans residues 79-89; that stretch reads QFQNLRQLGSK. Residue Lys89 forms a Glycyl lysine isopeptide (Lys-Gly) (interchain with G-Cter in ubiquitin) linkage. Residues 90–114 form a helical membrane-spanning segment; sequence YILGIAGLFTIFSSFVFSTVVIHFL. Residues 115–123 are Lumenal-facing; the sequence is DKELTGLNE. A helical membrane pass occupies residues 124 to 149; sequence ALPFFLLLIDLSRASALAKFALSSNS. Over 150–159 the chain is Cytoplasmic; sequence QDEVRENIAR. The helical transmembrane segment at 160–187 threads the bilayer; it reads GMAILGPTFTLDALVECLVIGVGTMSGV. Residues 188–191 lie on the Lumenal side of the membrane; sequence RQLE. The chain crosses the membrane as a helical span at residues 192–220; the sequence is IMCCFGCMSVLANYFVFMTFFPACVSLVL. At 221-248 the chain is on the cytoplasmic side; the sequence is ELSRESREGRPIWQLSHFARVLEEEENK. Lys248 participates in a covalent cross-link: Glycyl lysine isopeptide (Lys-Gly) (interchain with G-Cter in ubiquitin). Residues 249-275 traverse the membrane as a helical segment; the sequence is PNPVTQRVKMIMSLGLVLVHAHSRWIA. Topologically, residues 276-314 are lumenal; sequence DPSPQNSTTEHSKVSLGLDEDVSKRIEPSVSLWQFYLSK. Asn281 carries an N-linked (GlcNAc...) asparagine glycan. A helical transmembrane segment spans residues 315–339; the sequence is MISMDIEQVVTLSLAFLLAVKYIFF. Topologically, residues 340-887 are cytoplasmic; the sequence is EQAETESTLS…LQGTCTKKSA (548 aa). Residues Glu558, Lys690, and Asp766 each act as charge relay system in the active site. The active-site Proton donor is His865. Ser871 is subject to Phosphoserine; by AMPK.

This sequence belongs to the HMG-CoA reductase family. As to quaternary structure, homotetramer. Homodimer. Interacts (via its SSD) with INSIG1; the interaction, accelerated by sterols, leads to the recruitment of HMGCR to AMFR/gp78 for its ubiquitination by the sterol-mediated ERAD pathway. Interacts with UBIAD1. N-glycosylated. Glycosylated with high mannose chains including Man(6)(GlcNAc)(2), Man(7)(GlcNAc)(2) and Man(8)(GlcNAc)(2). Deglycosylated by NGLY1 on release from the endoplasmic reticulum (ER) in a sterol-mediated manner. In terms of processing, undergoes sterol-mediated ubiquitination and ER-associated degradation (ERAD). Accumulation of sterols in the endoplasmic reticulum (ER) membrane, triggers binding of the reductase to the ER membrane protein INSIG1 or INSIG2. The INSIG1 binding leads to the recruitment of the ubiquitin ligase, AMFR/gp78, RNF139 or RNF145, initiating ubiquitination of the reductase. The ubiquitinated reductase is then extracted from the ER membrane and delivered to cytosolic 26S proteosomes by a mechanism probably mediated by the ATPase Valosin-containing protein VCP/p97. The INSIG2-binding leads to the recruitment of the ubiquitin ligase RNF139, initiating ubiquitination of the reductase. Lys-248 is the main site of ubiquitination. Ubiquitination is enhanced by the presence of a geranylgeranylated protein. Post-translationally, phosphorylated. Phosphorylation at Ser-871 reduces the catalytic activity.

It localises to the endoplasmic reticulum membrane. Its subcellular location is the peroxisome membrane. It catalyses the reaction (R)-mevalonate + 2 NADP(+) + CoA = (3S)-3-hydroxy-3-methylglutaryl-CoA + 2 NADPH + 2 H(+). The protein operates within metabolic intermediate biosynthesis; (R)-mevalonate biosynthesis; (R)-mevalonate from acetyl-CoA: step 3/3. Regulated by a negative feedback mechanism through sterols and non-sterol metabolites derived from mevalonate. Phosphorylation at Ser-871 down-regulates the catalytic activity. Catalyzes the conversion of (3S)-hydroxy-3-methylglutaryl-CoA (HMG-CoA) to mevalonic acid, the rate-limiting step in the synthesis of cholesterol and other isoprenoids, thus plays a critical role in cellular cholesterol homeostasis. The polypeptide is 3-hydroxy-3-methylglutaryl-coenzyme A reductase (HMGCR) (Cricetulus griseus (Chinese hamster)).